The following is a 425-amino-acid chain: 5'-deoxyadenosine deaminase (425 aa).

Residues histidine 62 and histidine 64 each coordinate Zn(2+). Positions 91 and 183 each coordinate substrate. Histidine 210 contributes to the Zn(2+) binding site. Positions 213 and 298 each coordinate substrate. Aspartate 298 provides a ligand contact to Zn(2+).

It belongs to the metallo-dependent hydrolases superfamily. MTA/SAH deaminase family. In terms of assembly, homotetramer. Zn(2+) is required as a cofactor.

The enzyme catalyses 5'-deoxyadenosine + H2O + H(+) = 5'-deoxyinosine + NH4(+). It catalyses the reaction S-adenosyl-L-homocysteine + H2O + H(+) = S-inosyl-L-homocysteine + NH4(+). It carries out the reaction S-methyl-5'-thioadenosine + H2O + H(+) = S-methyl-5'-thioinosine + NH4(+). The catalysed reaction is adenosine + H2O + H(+) = inosine + NH4(+). It functions in the pathway amino-acid biosynthesis; S-adenosyl-L-methionine biosynthesis. Its function is as follows. Catalyzes the deamination of three SAM-derived enzymatic products, namely 5'-deoxyadenosine, S-adenosyl-L-homocysteine, and 5'-methylthioadenosine, to produce the inosine analogs. Can also deaminate adenosine. The preferred substrate for this enzyme is 5'-deoxyadenosine, but all these substrates are efficiently deaminated. Likely functions in a S-adenosyl-L-methionine (SAM) recycling pathway from S-adenosyl-L-homocysteine (SAH) produced from SAM-dependent methylation reactions. May also be involved in the recycling of 5'-deoxyadenosine, whereupon the 5'-deoxyribose moiety of 5'-deoxyinosine is further metabolized to deoxyhexoses used for the biosynthesis of aromatic amino acids in methanogens. The sequence is that of 5'-deoxyadenosine deaminase from Methanosphaera stadtmanae (strain ATCC 43021 / DSM 3091 / JCM 11832 / MCB-3).